The following is a 480-amino-acid chain: Protein nucleotidyltransferase YdiU (480 aa).

ATP is bound by residues Gly86, Gly88, Arg89, Lys109, Asp121, Gly122, Arg172, and Arg179. The Proton acceptor role is filled by Asp248. Residues Asn249 and Asp258 each coordinate Mg(2+). Residue Asp258 participates in ATP binding.

Belongs to the SELO family. Mg(2+) serves as cofactor. Mn(2+) is required as a cofactor.

The catalysed reaction is L-seryl-[protein] + ATP = 3-O-(5'-adenylyl)-L-seryl-[protein] + diphosphate. It carries out the reaction L-threonyl-[protein] + ATP = 3-O-(5'-adenylyl)-L-threonyl-[protein] + diphosphate. It catalyses the reaction L-tyrosyl-[protein] + ATP = O-(5'-adenylyl)-L-tyrosyl-[protein] + diphosphate. The enzyme catalyses L-histidyl-[protein] + UTP = N(tele)-(5'-uridylyl)-L-histidyl-[protein] + diphosphate. The catalysed reaction is L-seryl-[protein] + UTP = O-(5'-uridylyl)-L-seryl-[protein] + diphosphate. It carries out the reaction L-tyrosyl-[protein] + UTP = O-(5'-uridylyl)-L-tyrosyl-[protein] + diphosphate. Functionally, nucleotidyltransferase involved in the post-translational modification of proteins. It can catalyze the addition of adenosine monophosphate (AMP) or uridine monophosphate (UMP) to a protein, resulting in modifications known as AMPylation and UMPylation. This chain is Protein nucleotidyltransferase YdiU, found in Salmonella arizonae (strain ATCC BAA-731 / CDC346-86 / RSK2980).